The primary structure comprises 631 residues: Putative ATP-dependent DNA helicase Q1 (631 aa).

A Helicase ATP-binding domain is found at 118 to 293; the sequence is INAVMSKEDA…KDMLGIQAAL (176 aa). Residue 131-138 coordinates ATP; it reads LSTGGGKS. A DEVH box motif is present at residues 237 to 240; sequence DEVH. One can recognise a Helicase C-terminal domain in the interval 318-466; the sequence is CTEEIAKTIK…NLYNMVRYAA (149 aa). Cys471, Cys489, Cys493, and Cys496 together coordinate Zn(2+). Positions 610–631 are disordered; the sequence is ESKSRKRKASSSVEEEDVMVLD. Residues 622 to 631 show a composition bias toward acidic residues; that stretch reads VEEEDVMVLD.

Belongs to the helicase family. RecQ subfamily. The cofactor is Zn(2+).

It localises to the nucleus. The catalysed reaction is Couples ATP hydrolysis with the unwinding of duplex DNA by translocating in the 3'-5' direction.. The enzyme catalyses ATP + H2O = ADP + phosphate + H(+). DNA helicase that may play a role in the repair of DNA that is damaged by ultraviolet light or other mutagens. Exhibits a magnesium-dependent ATP-dependent DNA-helicase activity that unwinds single- and double-stranded DNA in a 3'-5' direction. This is Putative ATP-dependent DNA helicase Q1 from Caenorhabditis elegans.